A 309-amino-acid chain; its full sequence is Protein FdhE (309 aa).

The protein belongs to the FdhE family.

It is found in the cytoplasm. Necessary for formate dehydrogenase activity. The chain is Protein FdhE from Salmonella paratyphi A (strain ATCC 9150 / SARB42).